Reading from the N-terminus, the 266-residue chain is Ribosomal RNA small subunit methyltransferase A (266 aa).

Residues N10, I12, G37, E58, D82, and N105 each contribute to the S-adenosyl-L-methionine site.

It belongs to the class I-like SAM-binding methyltransferase superfamily. rRNA adenine N(6)-methyltransferase family. RsmA subfamily.

Its subcellular location is the cytoplasm. It catalyses the reaction adenosine(1518)/adenosine(1519) in 16S rRNA + 4 S-adenosyl-L-methionine = N(6)-dimethyladenosine(1518)/N(6)-dimethyladenosine(1519) in 16S rRNA + 4 S-adenosyl-L-homocysteine + 4 H(+). Its function is as follows. Specifically dimethylates two adjacent adenosines (A1518 and A1519) in the loop of a conserved hairpin near the 3'-end of 16S rRNA in the 30S particle. May play a critical role in biogenesis of 30S subunits. This is Ribosomal RNA small subunit methyltransferase A from Mycoplasma capricolum subsp. capricolum (strain California kid / ATCC 27343 / NCTC 10154).